A 402-amino-acid chain; its full sequence is Prophage integrase IntZ (402 aa).

In terms of domain architecture, Core-binding (CB) spans 103 to 183; sequence AGFKKVAEDW…RIGEIFKFAV (81 aa). The region spanning 206-381 is the Tyr recombinase domain; sequence GHNAWIPISE…AYLKQRRAMM (176 aa). Catalysis depends on residues Arg244, Lys271, His332, Arg335, and His359. Tyr368 (O-(3'-phospho-DNA)-tyrosine intermediate) is an active-site residue.

The protein belongs to the 'phage' integrase family.

Integrase is necessary for integration of the phage into the host genome by site-specific recombination. In conjunction with excisionase, integrase is also necessary for excision of the prophage from the host genome. In Escherichia coli (strain K12), this protein is Prophage integrase IntZ (intZ).